An 85-amino-acid polypeptide reads, in one-letter code: Large ribosomal subunit protein bL31B (85 aa).

It belongs to the bacterial ribosomal protein bL31 family. Type B subfamily. As to quaternary structure, part of the 50S ribosomal subunit.

The chain is Large ribosomal subunit protein bL31B from Kocuria rhizophila (strain ATCC 9341 / DSM 348 / NBRC 103217 / DC2201).